The sequence spans 340 residues: DNA-directed RNA polymerase subunit alpha (340 aa).

The segment at 1 to 236 (MLSLSKNWNT…EQLQLFIAFE (236 aa)) is alpha N-terminal domain (alpha-NTD). The tract at residues 251–340 (FSPYLLKRVD…LSKRYEDSYN (90 aa)) is alpha C-terminal domain (alpha-CTD).

This sequence belongs to the RNA polymerase alpha chain family. Homodimer. The RNAP catalytic core consists of 2 alpha, 1 beta, 1 beta' and 1 omega subunit. When a sigma factor is associated with the core the holoenzyme is formed, which can initiate transcription.

It carries out the reaction RNA(n) + a ribonucleoside 5'-triphosphate = RNA(n+1) + diphosphate. DNA-dependent RNA polymerase catalyzes the transcription of DNA into RNA using the four ribonucleoside triphosphates as substrates. This Rickettsia prowazekii (strain Madrid E) protein is DNA-directed RNA polymerase subunit alpha.